Here is a 460-residue protein sequence, read N- to C-terminus: ATP synthase subunit beta (460 aa).

149-156 lines the ATP pocket; that stretch reads GGAGVGKT.

This sequence belongs to the ATPase alpha/beta chains family. F-type ATPases have 2 components, CF(1) - the catalytic core - and CF(0) - the membrane proton channel. CF(1) has five subunits: alpha(3), beta(3), gamma(1), delta(1), epsilon(1). CF(0) has three main subunits: a(1), b(2) and c(9-12). The alpha and beta chains form an alternating ring which encloses part of the gamma chain. CF(1) is attached to CF(0) by a central stalk formed by the gamma and epsilon chains, while a peripheral stalk is formed by the delta and b chains.

Its subcellular location is the cell membrane. The enzyme catalyses ATP + H2O + 4 H(+)(in) = ADP + phosphate + 5 H(+)(out). Its function is as follows. Produces ATP from ADP in the presence of a proton gradient across the membrane. The catalytic sites are hosted primarily by the beta subunits. This chain is ATP synthase subunit beta, found in Acholeplasma laidlawii (strain PG-8A).